The sequence spans 160 residues: Lymphocyte antigen 96 (160 aa).

Residues 1–16 form the signal peptide; sequence MFPFMLFSTLFSSIFT. Cystine bridges form between Cys-25–Cys-51, Cys-37–Cys-148, and Cys-95–Cys-105. N-linked (GlcNAc...) asparagine glycosylation occurs at Asn-26. An N-linked (GlcNAc...) asparagine glycan is attached at Asn-114. The segment at 119–123 is interaction with lipopolysaccharide; it reads FSFQG. N-linked (GlcNAc...) asparagine glycosylation occurs at Asn-150.

As to quaternary structure, heterogeneous homomer formed from homodimers; disulfide-linked. Belongs to the lipopolysaccharide (LPS) receptor, a multi-protein complex containing at least CD14, LY96 and TLR4. Binds to the extracellular domains of TLR2 and TLR4. Ligand binding induces interaction with TLR4 and oligomerization of the complex. In terms of processing, N-glycosylated.

The protein resides in the secreted. The protein localises to the extracellular space. In terms of biological role, binds bacterial lipopolysaccharide (LPS). Cooperates with TLR4 in the innate immune response to bacterial lipopolysaccharide (LPS), and with TLR2 in the response to cell wall components from Gram-positive and Gram-negative bacteria. Enhances TLR4-dependent activation of NF-kappa-B. Cells expressing both LY96 and TLR4, but not TLR4 alone, respond to LPS. In Bos taurus (Bovine), this protein is Lymphocyte antigen 96 (LY96).